Here is a 210-residue protein sequence, read N- to C-terminus: Thymidylate kinase (210 aa).

9–16 lines the ATP pocket; sequence GPEGAGKT.

Belongs to the thymidylate kinase family.

It catalyses the reaction dTMP + ATP = dTDP + ADP. In terms of biological role, phosphorylation of dTMP to form dTDP in both de novo and salvage pathways of dTTP synthesis. This chain is Thymidylate kinase, found in Thermomicrobium roseum (strain ATCC 27502 / DSM 5159 / P-2).